The chain runs to 349 residues: MHRNFRKWIFYVFLCFGVIYVKLGALSSVVALGANIICNKIPGLAPRQRAICQSRPDAIIVIGEGAQMGINECQYQFRYGRWNCSALGEKTVFGQELRVGSREAAFTYAITAAGVAHAVTAACSQGNLSNCGCDREKQGYYNQEEGWKWGGCSADIRYGIEFSRRFVDAREIKKNARRLMNLHNNEAGRKVLEERMKLECKCHGVSGSCTTKTCWTTLPKFREIGYILKEKYNAAVQVEVVRASRLRQPTFLKIKQIKSYQKPMETDLVYIEKSPNYCEEDASTGSVGTQGRLCNRTSPNADGCDMMCCGRGYNTHQYTKVWQCNCKFHWCCFVKCNTCSERTEVFTCK.

A signal peptide spans methionine 1–glycine 24. 5 disulfide bridges follow: cysteine 73-cysteine 84, cysteine 123-cysteine 131, cysteine 133-cysteine 152, cysteine 200-cysteine 214, and cysteine 202-cysteine 209. N-linked (GlcNAc...) asparagine glycosylation is found at asparagine 83 and asparagine 127. A lipid anchor (O-palmitoleoyl serine; by PORCN) is attached at serine 206. The tract at residues valine 238–threonine 266 is disordered linker. Cystine bridges form between cysteine 278–cysteine 309, cysteine 294–cysteine 304, cysteine 308–cysteine 348, cysteine 324–cysteine 339, cysteine 326–cysteine 336, and cysteine 331–cysteine 332. Residue asparagine 295 is glycosylated (N-linked (GlcNAc...) asparagine).

Belongs to the Wnt family. Palmitoleoylation is required for efficient binding to frizzled receptors. Depalmitoleoylation leads to Wnt signaling pathway inhibition. As to expression, expressed in differentiating lens fiber cells.

It is found in the secreted. The protein localises to the extracellular space. The protein resides in the extracellular matrix. In terms of biological role, ligand for members of the frizzled family of seven transmembrane receptors that functions in the canonical Wnt/beta-catenin signaling pathway. Required for normal fusion of the chorion and the allantois during placenta development. Required for central nervous system (CNS) angiogenesis and blood-brain barrier regulation. In Gallus gallus (Chicken), this protein is Protein Wnt-7b (WNT7B).